Reading from the N-terminus, the 83-residue chain is AGDAAAGEDKIGTCVACHGTDGQGLAPIYPNLTGQSATYLESSIKAYRDGQRKGGNAALMTPMAQGLSDEDIADIAAYYSSQE.

The heme c site is built by Cys14, Cys17, His18, and Met63.

As to quaternary structure, homodimer. In terms of processing, binds 1 heme c group covalently per subunit.

This Halomonas halodenitrificans (strain ATCC 12084 / NCIMB 8669) (Paracoccus halodenitrificans) protein is Cytochrome c-554(548).